The sequence spans 770 residues: Kinesin-like protein klpA (770 aa).

Positions 1-152 are disordered; sequence MENVQSRMQG…GLGKRGEWDQ (152 aa). A compositionally biased stretch (low complexity) spans 85 to 105; the sequence is SSTLTRSASAASRPRGPLSSS. The segment covering 106–119 has biased composition (polar residues); sequence TSGRPKTSMSTSRR. Positions 134–152 are enriched in basic and acidic residues; it reads THQEERSYGGLGKRGEWDQ. Residues 175 to 425 are a coiled coil; that stretch reads QESSGLKDAL…QELKGNIRVF (251 aa). One can recognise a Kinesin motor domain in the interval 421–756; that stretch reads NIRVFCRVRP…LKFATKVHNT (336 aa). An ATP-binding site is contributed by 514–521; it reads GQTGSGKT.

The protein belongs to the TRAFAC class myosin-kinesin ATPase superfamily. Kinesin family. NCD subfamily.

The protein resides in the cytoplasm. It localises to the cytoskeleton. The protein is Kinesin-like protein klpA (klpA) of Emericella nidulans (strain FGSC A4 / ATCC 38163 / CBS 112.46 / NRRL 194 / M139) (Aspergillus nidulans).